The sequence spans 242 residues: Myogenic factor 6 (242 aa).

A disordered region spans residues 31–63 (SPLYPGSDGTLSPCQDQMPQEAGSDSSGEEHVL). Positions 39–56 (GTLSPCQDQMPQEAGSDS) are enriched in polar residues. The region spanning 93 to 144 (DRRKAATLRERRRLKKINEAFEALKRRTVANPNQRLPKVEILRSAISYIERL) is the bHLH domain.

As to quaternary structure, efficient DNA binding requires dimerization with another bHLH protein. Interacts with CSRP3. In terms of tissue distribution, skeletal muscle.

It is found in the nucleus. Its function is as follows. Involved in muscle differentiation (myogenic factor). Induces fibroblasts to differentiate into myoblasts. Probable sequence specific DNA-binding protein. This Mus musculus (Mouse) protein is Myogenic factor 6 (Myf6).